A 342-amino-acid polypeptide reads, in one-letter code: D-erythrose-4-phosphate dehydrogenase (342 aa).

11–12 (RV) provides a ligand contact to NAD(+). Residues 153-155 (SCT), arginine 199, 212-213 (TK), and arginine 235 contribute to the substrate site. Cysteine 154 (nucleophile) is an active-site residue. Position 317 (asparagine 317) interacts with NAD(+).

Belongs to the glyceraldehyde-3-phosphate dehydrogenase family. Epd subfamily. In terms of assembly, homotetramer.

It is found in the cytoplasm. It catalyses the reaction D-erythrose 4-phosphate + NAD(+) + H2O = 4-phospho-D-erythronate + NADH + 2 H(+). The protein operates within cofactor biosynthesis; pyridoxine 5'-phosphate biosynthesis; pyridoxine 5'-phosphate from D-erythrose 4-phosphate: step 1/5. Catalyzes the NAD-dependent conversion of D-erythrose 4-phosphate to 4-phosphoerythronate. This chain is D-erythrose-4-phosphate dehydrogenase, found in Pseudoalteromonas atlantica (strain T6c / ATCC BAA-1087).